The sequence spans 1169 residues: MRPIISDYIQNDKRFQELDDVFGHQNILVTGLSPSAKATIIAEKYLKDQKQMLLITNNLYQADKLETDILQYIDHSEVYKYPVQDIMTEEFSTQSPQLMSERVRTLTALAHNKKGLFIVPLNGLKKWLTPFELWKDHQITLRVGEDIDVDEFLNKLVNMGYRRESVVSHIGEFSLRGGIIDIYPLIGQPVRIELFDTEVDSIRDFDVETQRSNDNIEEVSITTASDYVITDDVIQHLQSELKTAYEATRPKIDKSVRNDLKETYESFKLFETTFFDHQLLRRLVAFMYEQPSTLIDYFAKDAIIVADEYNRIKETEKTLTTEVDDFIQNLIESGNGFIGQSFMQYDGFESLLKDYPVTYFTLFTSTMPVQLQHIIKFSCKPVQQFYGQYDIMRSEFQRYVHNDYHIVVLVETETKVERIQSMLNEMHIPTVTNVQNDIKSGQVVVTEGSLSEGFELPYMQLVVITERELFKTKQKKQRKRTKTLSNAEKIKSYQDLNVGDYVVHVHHGVGRYLGVETLEVGDVHRDYIKLQYKGTDQLFVPVDQMDQVQKYVASEDKSPKLNKLGGSEWKKTKAKVQQSVEDIADELIALYKEREMSVGYQYGEDTAEQSAFEMDFPYELTPDQAKSIDEIKGDMERERPMDRLLCGDVGYGKTEVAVRAAFKAVMEGKQVAFLVPTTILAQQHYETLIERMQDFPVQIELISRFRSTKEVKETKEGLKSGYVDIVVGTHKLLGKDIHYKDLGLLIVDEEQRFGVRHKERIKTMKTNVDVLTLTATPIPRTLHMSMLGVRDLSVIETPPENRFPVQTYVLEQNSNFIKEALERELSRDGQVFYLYNRVQSIYEKREQLQMLMPDANIAVAHGQMTERDLEETMLSFINGEFDILVTTTIIETGVDVPNANTLIIEEADRFGLSQLYQLRGRVGRSSRIGYAYFLHSANKVLTETAEERLQAIKEFTELGSGFKIAMRDLNIRGAGNLLGKQQHGFIDSVGFDLYSQMLEEAVNEKRGIKEEEPDAPEVEMELNLDAYLPAEYIQNEQAKIEIYKKLRKVETEEQLFDIKDELIDRFNDYPVEVERLLEMVEIKIHALHAGVTLIKDKGKQIEVSLSTKATEQMNGEELFKQTQPLGRAMKLGVKENRMHVTLTKSKQWLDNLKFLVRCLEGSMVIEDEN.

Positions 634–795 constitute a Helicase ATP-binding domain; sequence DMERERPMDR…MLGVRDLSVI (162 aa). 647-654 provides a ligand contact to ATP; the sequence is GDVGYGKT. The short motif at 748-751 is the DEEQ box element; the sequence is DEEQ. The Helicase C-terminal domain maps to 809–970; that stretch reads VLEQNSNFIK…GFKIAMRDLN (162 aa).

This sequence in the N-terminal section; belongs to the UvrB family. The protein in the C-terminal section; belongs to the helicase family. RecG subfamily.

The protein resides in the cytoplasm. In terms of biological role, couples transcription and DNA repair by recognizing RNA polymerase (RNAP) stalled at DNA lesions. Mediates ATP-dependent release of RNAP and its truncated transcript from the DNA, and recruitment of nucleotide excision repair machinery to the damaged site. This chain is Transcription-repair-coupling factor, found in Staphylococcus haemolyticus (strain JCSC1435).